A 264-amino-acid chain; its full sequence is MLYRLVSHIPHILFKPVYDAYESYLLEKVKSGNIPKHVAIIMDGNRRWARKLEKPPWYGHLFGSKKLEEILEWCRELNIRTLTVYAFSTENFKRSKEEVEALMNLFEEKFKELVQDERVHRYGIRVNVLGRKDMLPENVRKAAEEAERATRKYSNYNLNIALAYGGRSEIADAVREIVRDVLEGKIKPEDIDEEAIKRYLYYPNMPDPDIVIRTGGEVRISNFLLYQIAYSELFFVDVYFPEFRKIDFLRIIREFQKRQRRFGR.

Asp43 is a catalytic residue. Asp43 lines the Mg(2+) pocket. Substrate-binding positions include 44–47, Trp48, His60, and 88–90; these read GNRR and STE. Asn91 serves as the catalytic Proton acceptor. Substrate is bound by residues Phe92, Arg94, Arg213, and 219-221; that span reads RIS. Residue Glu232 coordinates Mg(2+).

This sequence belongs to the UPP synthase family. In terms of assembly, homodimer. Requires Mg(2+) as cofactor.

The catalysed reaction is geranylgeranyl diphosphate + 7 isopentenyl diphosphate = tri-trans,hepta-cis-undecaprenyl diphosphate + 7 diphosphate. Functionally, catalyzes the sequential condensation of isopentenyl diphosphate (IPP) with geranylgeranyl diphosphate (GGPP) to yield (2Z,6Z,10Z,14Z,18Z,22Z,26Z,30E,34E,38E)-undecaprenyl diphosphate (tritrans,heptacis-UPP). It is probably the precursor of glycosyl carrier lipids. This is Tritrans,polycis-undecaprenyl-diphosphate synthase (geranylgeranyl-diphosphate specific) from Thermococcus kodakarensis (strain ATCC BAA-918 / JCM 12380 / KOD1) (Pyrococcus kodakaraensis (strain KOD1)).